A 348-amino-acid polypeptide reads, in one-letter code: Phenylalanine--tRNA ligase alpha subunit (348 aa).

Residue Glu-259 participates in Mg(2+) binding.

This sequence belongs to the class-II aminoacyl-tRNA synthetase family. Phe-tRNA synthetase alpha subunit type 1 subfamily. In terms of assembly, tetramer of two alpha and two beta subunits. Mg(2+) serves as cofactor.

It localises to the cytoplasm. The catalysed reaction is tRNA(Phe) + L-phenylalanine + ATP = L-phenylalanyl-tRNA(Phe) + AMP + diphosphate + H(+). This is Phenylalanine--tRNA ligase alpha subunit from Ligilactobacillus salivarius (strain UCC118) (Lactobacillus salivarius).